A 332-amino-acid chain; its full sequence is Ketol-acid reductoisomerase (NAD(+)) (332 aa).

Positions 1–181 (MKIYYDQDAD…GATRAGVIQT (181 aa)) constitute a KARI N-terminal Rossmann domain. NAD(+)-binding positions include 24–27 (YGSQ), Ser50, and 82–85 (DEKQ). His107 is an active-site residue. Gly133 provides a ligand contact to NAD(+). In terms of domain architecture, KARI C-terminal knotted spans 182 to 327 (TFKEETETDL…ARLRGMMPWL (146 aa)). Mg(2+) contacts are provided by Asp190, Glu194, Glu226, and Glu230. Ser251 is a binding site for substrate.

This sequence belongs to the ketol-acid reductoisomerase family. It depends on Mg(2+) as a cofactor.

It carries out the reaction (2R)-2,3-dihydroxy-3-methylbutanoate + NAD(+) = (2S)-2-acetolactate + NADH + H(+). Its pathway is amino-acid biosynthesis; L-isoleucine biosynthesis; L-isoleucine from 2-oxobutanoate: step 2/4. The protein operates within amino-acid biosynthesis; L-valine biosynthesis; L-valine from pyruvate: step 2/4. Involved in the biosynthesis of branched-chain amino acids (BCAA). Catalyzes an alkyl-migration followed by a ketol-acid reduction of (S)-2-acetolactate (S2AL) to yield (R)-2,3-dihydroxy-isovalerate. In the isomerase reaction, S2AL is rearranged via a Mg-dependent methyl migration to produce 3-hydroxy-3-methyl-2-ketobutyrate (HMKB). In the reductase reaction, this 2-ketoacid undergoes a metal-dependent reduction by NADH to yield (R)-2,3-dihydroxy-isovalerate. This chain is Ketol-acid reductoisomerase (NAD(+)), found in Thermacetogenium phaeum (strain ATCC BAA-254 / DSM 26808 / PB).